The following is a 778-amino-acid chain: Ent-trachylobane synthase KSL2, chloroplastic (778 aa).

Residues 1 to 37 (MLLTCTNSLKISSQAKEWESKTLTGMSLEQLNKRIRI) constitute a chloroplast transit peptide. 5 residues coordinate Mg(2+): Asp529, Asp533, Asn672, Asp673, and Asp680. Residues 529–533 (DDFFD) carry the DDXXD motif motif.

Belongs to the terpene synthase family. Requires Mg(2+) as cofactor.

It localises to the plastid. Its subcellular location is the chloroplast. It catalyses the reaction ent-copalyl diphosphate = ent-trachylobane + diphosphate. The catalysed reaction is ent-copalyl diphosphate = ent-kaur-16-ene + diphosphate. The protein operates within secondary metabolite biosynthesis; terpenoid biosynthesis. Functionally, diterpene cyclase involved in the biosynthesis of labdane-related diterpenoids (LRDs) natural products. Catalyzes the cyclization of ent-CDP into ent-trachylobane as a major and ent-kaurene as a minor product. The sequence is that of Ent-trachylobane synthase KSL2, chloroplastic from Ricinus communis (Castor bean).